We begin with the raw amino-acid sequence, 99 residues long: Plastocyanin (99 aa).

In terms of domain architecture, Plastocyanin-like spans 1–99 (IEVLLGSDDG…AGMVGKVTVN (99 aa)). Cu cation is bound by residues H37, C84, H87, and M92.

It belongs to the plastocyanin family. Cu(2+) serves as cofactor.

The protein resides in the plastid. It localises to the chloroplast thylakoid membrane. Functionally, participates in electron transfer between P700 and the cytochrome b6-f complex in photosystem I. The polypeptide is Plastocyanin (PETE) (Solanum crispum (Chilean potato-tree)).